The chain runs to 351 residues: Glycerol-1-phosphate dehydrogenase [NAD(P)+] (351 aa).

Residues 97-101 and 119-122 each bind NAD(+); these read GTVID and TSPS. A substrate-binding site is contributed by Asp124. Position 128 (Ser128) interacts with NAD(+). Asp171 contributes to the substrate binding site. Zn(2+) is bound by residues Asp171 and His251. His255 lines the substrate pocket. Residue His267 coordinates Zn(2+).

Belongs to the glycerol-1-phosphate dehydrogenase family. As to quaternary structure, homodimer. It depends on Zn(2+) as a cofactor.

It is found in the cytoplasm. It carries out the reaction sn-glycerol 1-phosphate + NAD(+) = dihydroxyacetone phosphate + NADH + H(+). It catalyses the reaction sn-glycerol 1-phosphate + NADP(+) = dihydroxyacetone phosphate + NADPH + H(+). It functions in the pathway membrane lipid metabolism; glycerophospholipid metabolism. Functionally, catalyzes the NAD(P)H-dependent reduction of dihydroxyacetonephosphate (DHAP or glycerone phosphate) to glycerol 1-phosphate (G1P). The G1P thus generated is used as the glycerophosphate backbone of phospholipids in the cellular membranes of Archaea. This is Glycerol-1-phosphate dehydrogenase [NAD(P)+] from Sulfolobus acidocaldarius (strain ATCC 33909 / DSM 639 / JCM 8929 / NBRC 15157 / NCIMB 11770).